The following is a 428-amino-acid chain: Major capsid protein (428 aa).

Positions 4 to 24 (IEELRRQRAGINEQIQALATI) form a coiled coil.

This sequence belongs to the HK97 phage major capsid protein family. In terms of processing, the scaffolding domain delta is cleaved by the viral protease and lost after assembly.

It localises to the virion. Major capsid protein that assembles to form an icosahedral capsid. The chain is Major capsid protein from Klebsiella oxytoca (Bacteriophage phiKO2).